The chain runs to 348 residues: Ribosomal RNA small subunit methyltransferase C (348 aa).

The protein belongs to the methyltransferase superfamily. RsmC family. In terms of assembly, monomer.

The protein resides in the cytoplasm. It catalyses the reaction guanosine(1207) in 16S rRNA + S-adenosyl-L-methionine = N(2)-methylguanosine(1207) in 16S rRNA + S-adenosyl-L-homocysteine + H(+). Functionally, specifically methylates the guanine in position 1207 of 16S rRNA in the 30S particle. This Pectobacterium atrosepticum (strain SCRI 1043 / ATCC BAA-672) (Erwinia carotovora subsp. atroseptica) protein is Ribosomal RNA small subunit methyltransferase C.